We begin with the raw amino-acid sequence, 372 residues long: Aminomethyltransferase (372 aa).

This sequence belongs to the GcvT family. As to quaternary structure, the glycine cleavage system is composed of four proteins: P, T, L and H.

It carries out the reaction N(6)-[(R)-S(8)-aminomethyldihydrolipoyl]-L-lysyl-[protein] + (6S)-5,6,7,8-tetrahydrofolate = N(6)-[(R)-dihydrolipoyl]-L-lysyl-[protein] + (6R)-5,10-methylene-5,6,7,8-tetrahydrofolate + NH4(+). In terms of biological role, the glycine cleavage system catalyzes the degradation of glycine. In Prochlorococcus marinus (strain NATL1A), this protein is Aminomethyltransferase.